We begin with the raw amino-acid sequence, 299 residues long: MLFEQIARNKRHTLYVMAAFVILLAVIGLAVGYVFFNSAIAGLLVALIAAVFYMVLMISQSTDIVMSMNHGRELHQADDDPELWHIVEDMALVAKVPMPRVFIIDDESPNAFATGNDPEHAAVAVTTGIQARLTREEMEGVIGHEMSHVRNYDIRLQTIALALTAAISLLVNWGMNAFWWGGGRRSRDNDRDGNGAQVLLMILAIVVIILAPLAASLVQMALSRNREYLADAGSVELTRNPLGLISALEKIDDSQPMQAADPSSAALYISDPFKAKKSWTHLFDTHPPMADRITRLKNM.

The next 2 membrane-spanning stretches (helical) occupy residues 16–36 (VMAAFVILLAVIGLAVGYVFF) and 38–58 (SAIAGLLVALIAAVFYMVLMI). His-144 contacts Zn(2+). Glu-145 is a catalytic residue. His-148 contributes to the Zn(2+) binding site. 2 consecutive transmembrane segments (helical) span residues 159–179 (IALALTAAISLLVNWGMNAFW) and 198–218 (VLLMILAIVVIILAPLAASLV). Glu-227 is a binding site for Zn(2+).

It belongs to the peptidase M48B family. Zn(2+) serves as cofactor.

Its subcellular location is the cell membrane. This chain is Protease HtpX homolog, found in Lactiplantibacillus plantarum (strain ATCC BAA-793 / NCIMB 8826 / WCFS1) (Lactobacillus plantarum).